Here is a 414-residue protein sequence, read N- to C-terminus: Putative competence-damage inducible protein (414 aa).

It belongs to the CinA family.

In Geobacillus kaustophilus (strain HTA426), this protein is Putative competence-damage inducible protein.